We begin with the raw amino-acid sequence, 399 residues long: Argininosuccinate synthase (399 aa).

Residue 8-16 participates in ATP binding; the sequence is AYSGGLDTT. Tyrosine 87 is a binding site for L-citrulline. Glycine 117 lines the ATP pocket. 3 residues coordinate L-aspartate: threonine 119, asparagine 123, and aspartate 124. An L-citrulline-binding site is contributed by asparagine 123. The L-citrulline site is built by arginine 127, serine 175, glutamate 259, and tyrosine 271.

It belongs to the argininosuccinate synthase family. Type 1 subfamily. In terms of assembly, homotetramer.

Its subcellular location is the cytoplasm. It catalyses the reaction L-citrulline + L-aspartate + ATP = 2-(N(omega)-L-arginino)succinate + AMP + diphosphate + H(+). It participates in amino-acid biosynthesis; L-arginine biosynthesis; L-arginine from L-ornithine and carbamoyl phosphate: step 2/3. This Corynebacterium urealyticum (strain ATCC 43042 / DSM 7109) protein is Argininosuccinate synthase.